Reading from the N-terminus, the 441-residue chain is NADH-quinone oxidoreductase subunit D 1 (441 aa).

It belongs to the complex I 49 kDa subunit family. In terms of assembly, NDH-1 is composed of 14 different subunits. Subunits NuoB, C, D, E, F, and G constitute the peripheral sector of the complex.

The protein localises to the cell membrane. The catalysed reaction is a quinone + NADH + 5 H(+)(in) = a quinol + NAD(+) + 4 H(+)(out). Functionally, NDH-1 shuttles electrons from NADH, via FMN and iron-sulfur (Fe-S) centers, to quinones in the respiratory chain. The immediate electron acceptor for the enzyme in this species is believed to be a menaquinone. Couples the redox reaction to proton translocation (for every two electrons transferred, four hydrogen ions are translocated across the cytoplasmic membrane), and thus conserves the redox energy in a proton gradient. In Salinispora arenicola (strain CNS-205), this protein is NADH-quinone oxidoreductase subunit D 1.